A 112-amino-acid chain; its full sequence is MAM and fibronectin type III domain-containing protein 2 (112 aa).

As to expression, component of the acid-insoluble and acid-soluble organic matrix of the aragonitic skeleton (at protein level).

The protein resides in the secreted. The protein is MAM and fibronectin type III domain-containing protein 2 of Acropora millepora (Staghorn coral).